Here is a 509-residue protein sequence, read N- to C-terminus: Photosystem II CP47 reaction center protein (509 aa).

Helical transmembrane passes span 21–36, 101–115, 140–156, 203–218, 237–252, and 457–472; these read SVHL…WAGS, IVLS…IWHW, GIHL…FGAF, IAAG…FHLN, VLSS…SFVV, and NFAL…HGSR.

This sequence belongs to the PsbB/PsbC family. PsbB subfamily. In terms of assembly, PSII is composed of 1 copy each of membrane proteins PsbA, PsbB, PsbC, PsbD, PsbE, PsbF, PsbH, PsbI, PsbJ, PsbK, PsbL, PsbM, PsbT, PsbY, PsbZ, Psb30/Ycf12, at least 3 peripheral proteins of the oxygen-evolving complex and a large number of cofactors. It forms dimeric complexes. It depends on Binds multiple chlorophylls. PSII binds additional chlorophylls, carotenoids and specific lipids. as a cofactor.

The protein localises to the plastid. The protein resides in the chloroplast thylakoid membrane. In terms of biological role, one of the components of the core complex of photosystem II (PSII). It binds chlorophyll and helps catalyze the primary light-induced photochemical processes of PSII. PSII is a light-driven water:plastoquinone oxidoreductase, using light energy to abstract electrons from H(2)O, generating O(2) and a proton gradient subsequently used for ATP formation. The protein is Photosystem II CP47 reaction center protein of Cyanidium caldarium (Red alga).